The sequence spans 379 residues: Salicylate/benzoate carboxyl methyltransferase (379 aa).

Residue tyrosine 40 coordinates S-adenosyl-L-homocysteine. Salicylate is bound at residue glutamine 47. S-adenosyl-L-homocysteine-binding residues include cysteine 82, asparagine 87, aspartate 119, leucine 120, serine 155, and phenylalanine 156. Salicylate contacts are provided by histidine 176 and tryptophan 177. The Mg(2+) site is built by asparagine 188, aspartate 275, phenylalanine 277, and asparagine 278.

Belongs to the methyltransferase superfamily. Type-7 methyltransferase family. SABATH subfamily. As to quaternary structure, homodimer. It depends on Mg(2+) as a cofactor. Expressed in flowers and at lower levels in leaves and stems. Hardly detected in roots and siliques. Expressed in the sepals and the leaf trichomes and hydathodes.

The catalysed reaction is benzoate + S-adenosyl-L-methionine = methyl benzoate + S-adenosyl-L-homocysteine. It catalyses the reaction salicylate + S-adenosyl-L-methionine = methyl salicylate + S-adenosyl-L-homocysteine. Methyltransferase involved in the biosynthesis of methylsalicylate in response to stresses. Utilizes salicylic acid (SA) more efficiently than benzoic acid (BA). Can also use anthranilic acid and m-hydroxybenzoic acid as substrate. This Arabidopsis thaliana (Mouse-ear cress) protein is Salicylate/benzoate carboxyl methyltransferase (BSMT1).